Here is a 419-residue protein sequence, read N- to C-terminus: eIF5-mimic protein 1 (419 aa).

The interval 1 to 22 (MNKHQKPVLTGQRFKTRKRDEK) is disordered. Lys117 is subject to N6-acetyllysine. The region spanning 248–415 (VQQSLGTRKE…QNAEEESESE (168 aa)) is the W2 domain. Phosphoserine is present on residues Ser412 and Ser414.

It belongs to the BZW family. Interacts with EIF3E, EIF2S2 and EIF3C.

It localises to the cytoplasm. Translation initiation regulator which represses non-AUG initiated translation and repeat-associated non-AUG (RAN) initiated translation by acting as a competitive inhibitor of eukaryotic translation initiation factor 5 (EIF5) function. Increases the accuracy of translation initiation by impeding EIF5-dependent translation from non-AUG codons by competing with it for interaction with EIF2S2 within the 43S pre-initiation complex (PIC) in an EIF3C-binding dependent manner. The polypeptide is eIF5-mimic protein 1 (BZW2) (Macaca fascicularis (Crab-eating macaque)).